The following is a 473-amino-acid chain: GTPase Der (473 aa).

2 consecutive EngA-type G domains span residues 3-167 and 203-378; these read FTVA…GKDR and LRVA…RVWN. GTP contacts are provided by residues 9–16, 56–60, 119–122, 209–216, 256–260, and 321–324; these read GRPNVGKS, DTAGL, NKSE, GRPNAGKS, DTAGM, and NKWD. Residues 379–463 form the KH-like domain; sequence KRISTARLNR…PIRIHFRSPD (85 aa).

The protein belongs to the TRAFAC class TrmE-Era-EngA-EngB-Septin-like GTPase superfamily. EngA (Der) GTPase family. Associates with the 50S ribosomal subunit.

In terms of biological role, GTPase that plays an essential role in the late steps of ribosome biogenesis. This chain is GTPase Der, found in Rhizobium etli (strain ATCC 51251 / DSM 11541 / JCM 21823 / NBRC 15573 / CFN 42).